Here is a 638-residue protein sequence, read N- to C-terminus: Signal recognition particle receptor subunit alpha (638 aa).

Disordered stretches follow at residues 129 to 205, 218 to 245, and 262 to 315; these read KIRA…VELS, IQKH…KKAP, and SAPT…ATKG. Basic and acidic residues-rich tracts occupy residues 137–146 and 153–165; these read KKFEDSEKAK and IETR…EKAK. Residue Ser177 is modified to Phosphoserine. Basic and acidic residues predominate over residues 218 to 239; sequence IQKHGRGLEKSSKSTKSDAPKE. Residue Thr284 is modified to Phosphothreonine. A phosphoserine mark is found at Ser296, Ser297, and Ser298. The span at 304 to 314 shows a compositional bias: polar residues; that stretch reads AQNASKPSATK. The segment at 419–636 is NG domain; it reads YVVTFCGVNG…NAKAVVAALM (218 aa). Position 425–432 (425–432) interacts with GTP; it reads GVNGVGKS. Position 473 is a phosphoserine (Ser473). 520-524 lines the GTP pocket; sequence DTAGR. The residue at position 578 (Thr578) is a Phosphothreonine. Position 588–591 (588–591) interacts with GTP; it reads TKFD.

It belongs to the GTP-binding SRP family. As to quaternary structure, heterodimer with SRPRB. Interacts with the signal recognition particle (SRP) complex subunit SRP54.

The protein resides in the endoplasmic reticulum membrane. In terms of biological role, component of the SRP (signal recognition particle) receptor. Ensures, in conjunction with the signal recognition particle, the correct targeting of the nascent secretory proteins to the endoplasmic reticulum membrane system. Forms a guanosine 5'-triphosphate (GTP)-dependent complex with the SRP subunit SRP54. SRP receptor compaction and GTPase rearrangement drive SRP-mediated cotranslational protein translocation into the ER. In Canis lupus familiaris (Dog), this protein is Signal recognition particle receptor subunit alpha.